We begin with the raw amino-acid sequence, 431 residues long: Serine/threonine-protein kinase Sgk1 (431 aa).

The interval 1 to 60 (MTVKTEAAKGTLTYSRMRGMVAILIAFMKQRRMGLNDFIQKIANNSYACKHPEVQSILKI) is necessary for localization to the mitochondria. The segment at 66–92 (PELMNANPSPPPSPSQQINLGPSSNPH) is disordered. At Ser-74 the chain carries Phosphoserine. Residue Ser-78 is modified to Phosphoserine; by MAPK7. Over residues 81 to 91 (QQINLGPSSNP) the composition is skewed to polar residues. The Protein kinase domain maps to 98–355 (FHFLKVIGKG…FMEIKSHVFF (258 aa)). ATP-binding positions include 104–112 (IGKGSFGKV) and Lys-127. Positions 131–141 (KKAILKKKEEK) match the Nuclear localization signal motif. Asp-222 serves as the catalytic Proton acceptor. Thr-256 is subject to Phosphothreonine; by PDPK1. The AGC-kinase C-terminal domain occupies 356–431 (SLINWDDLIN…SYAPPTDSFL (76 aa)). At Thr-369 the chain carries Phosphothreonine; by PKA. A phosphoserine mark is found at Ser-397, Ser-401, and Ser-422.

The protein belongs to the protein kinase superfamily. AGC Ser/Thr protein kinase family. In terms of assembly, homodimer; disulfide-linked. Forms a trimeric complex with FBXW7 and NOTCH1. Interacts with MAPK3/ERK1, MAPK1/ERK2, MAP2K1/MEK1, MAP2K2/MEK2, NEDD4, NEDD4L, MAPT/TAU, MAPK7, CREB1, SLC9A3R2/NHERF2 and KCNJ1/ROMK1. Associates with the mammalian target of rapamycin complex 2 (mTORC2) via an interaction with MAPKAP1/SIN1. Post-translationally, regulated by phosphorylation. Activated by phosphorylation on Ser-422 by mTORC2, transforming it into a substrate for PDPK1 which phosphorylates it on Thr-256. Phosphorylation on Ser-397 and Ser-401 are also essential for its activity. Phosphorylation on Ser-78 by MAPK7 is required for growth factor-induced cell cycle progression. In terms of processing, ubiquitinated by NEDD4L; which promotes proteasomal degradation. Ubiquitinated by SYVN1 at the endoplasmic reticulum; which promotes rapid proteasomal degradation and maintains a high turnover rate in resting cells.

It localises to the cytoplasm. The protein localises to the nucleus. It is found in the endoplasmic reticulum membrane. Its subcellular location is the cell membrane. The protein resides in the mitochondrion. The enzyme catalyses L-seryl-[protein] + ATP = O-phospho-L-seryl-[protein] + ADP + H(+). It carries out the reaction L-threonyl-[protein] + ATP = O-phospho-L-threonyl-[protein] + ADP + H(+). Its activity is regulated as follows. Two specific sites, one in the kinase domain (Thr-256) and the other in the C-terminal regulatory region (Ser-422), need to be phosphorylated for its full activation. Phosphorylation at Ser-397 and Ser-401 are also essential for its activity. Activated by WNK1, WNK2, WNK3 and WNK4; which promote phosphorylation by mTORC2. Serine/threonine-protein kinase which is involved in the regulation of a wide variety of ion channels, membrane transporters, cellular enzymes, transcription factors, neuronal excitability, cell growth, proliferation, survival, migration and apoptosis. Plays an important role in cellular stress response. Contributes to regulation of renal Na(+) retention, renal K(+) elimination, salt appetite, gastric acid secretion, intestinal Na(+)/H(+) exchange and nutrient transport, insulin-dependent salt sensitivity of blood pressure, salt sensitivity of peripheral glucose uptake, cardiac repolarization and memory consolidation. Up-regulates Na(+) channels: SCNN1A/ENAC, SCN5A and ASIC1/ACCN2, K(+) channels: KCNJ1/ROMK1, KCNA1-5, KCNQ1-5 and KCNE1, epithelial Ca(2+) channels: TRPV5 and TRPV6, chloride channels: BSND, CLCN2 and CFTR, glutamate transporters: SLC1A3/EAAT1, SLC1A2 /EAAT2, SLC1A1/EAAT3, SLC1A6/EAAT4 and SLC1A7/EAAT5, amino acid transporters: SLC1A5/ASCT2, SLC38A1/SN1 and SLC6A19, creatine transporter: SLC6A8, Na(+)/dicarboxylate cotransporter: SLC13A2/NADC1, Na(+)-dependent phosphate cotransporter: SLC34A2/NAPI-2B, glutamate receptor: GRIK2/GLUR6. Up-regulates carriers: SLC9A3/NHE3, SLC12A1/NKCC2, SLC12A3/NCC, SLC5A3/SMIT, SLC2A1/GLUT1, SLC5A1/SGLT1 and SLC15A2/PEPT2. Regulates enzymes: GSK3A/B, PMM2 and Na(+)/K(+) ATPase, and transcription factors: CTNNB1 and nuclear factor NF-kappa-B. Stimulates sodium transport into epithelial cells by enhancing the stability and expression of SCNN1A/ENAC. This is achieved by phosphorylating the NEDD4L ubiquitin E3 ligase, promoting its interaction with 14-3-3 proteins, thereby preventing it from binding to SCNN1A/ENAC and targeting it for degradation. Regulates store-operated Ca(+2) entry (SOCE) by stimulating ORAI1 and STIM1. Regulates KCNJ1/ROMK1 directly via its phosphorylation or indirectly via increased interaction with SLC9A3R2/NHERF2. Phosphorylates MDM2 and activates MDM2-dependent ubiquitination of p53/TP53. Phosphorylates MAPT/TAU and mediates microtubule depolymerization and neurite formation in hippocampal neurons. Phosphorylates SLC2A4/GLUT4 and up-regulates its activity. Phosphorylates APBB1/FE65 and promotes its localization to the nucleus. Phosphorylates MAPK1/ERK2 and activates it by enhancing its interaction with MAP2K1/MEK1 and MAP2K2/MEK2. Phosphorylates FBXW7 and plays an inhibitory role in the NOTCH1 signaling. Phosphorylates FOXO1 resulting in its relocalization from the nucleus to the cytoplasm. Phosphorylates FOXO3, promoting its exit from the nucleus and interference with FOXO3-dependent transcription. Phosphorylates BRAF and MAP3K3/MEKK3 and inhibits their activity. Phosphorylates SLC9A3/NHE3 in response to dexamethasone, resulting in its activation and increased localization at the cell membrane. Phosphorylates CREB1. Necessary for vascular remodeling during angiogenesis. This is Serine/threonine-protein kinase Sgk1 (SGK1) from Macaca fascicularis (Crab-eating macaque).